Consider the following 565-residue polypeptide: DNA-binding protein scr1 (565 aa).

Over residues 1 to 19 (MSEATTATTTGKPSRSTKN) the composition is skewed to polar residues. Residues 1–25 (MSEATTATTTGKPSRSTKNPDAPRP) are disordered. 2 consecutive C2H2-type zinc fingers follow at residues 26–48 (YKCP…IRTH) and 54–78 (HVCT…ARIH). Disordered regions lie at residues 79–119 (TNAN…VHMT), 261–303 (SNAP…STGS), 390–434 (RPVS…DDPS), and 466–565 (ASTP…MTKP). The segment covering 80–102 (NANSRRNAAAAAAANNSARSSNS) has biased composition (low complexity). 3 stretches are compositionally biased toward polar residues: residues 108–119 (EPSTNNAGVHMT), 276–286 (LPSSSNTSPNH), and 294–303 (GLTSNSSTGS). Residues 391–413 (PVSPCSTAPSSPTFSTRSFSPTP) show a composition bias toward low complexity. Polar residues predominate over residues 466–478 (ASTPASGAVSRTP). Composition is skewed to low complexity over residues 479–492 (SSVS…VNSS), 517–526 (FSSSSRVSVS), and 537–555 (SSST…PAFS).

It belongs to the creA/MIG C2H2-type zinc-finger protein family.

The protein resides in the nucleus. In terms of biological role, involved in carbon catabolite repression. Represses the transcription of various genes including the inv1 gene. This chain is DNA-binding protein scr1 (scr1), found in Schizosaccharomyces pombe (strain 972 / ATCC 24843) (Fission yeast).